The sequence spans 140 residues: MPPKAAEKKPSTGGKAPAGKAPAEKKEAGKKTAAAATGDKKKRGKTRKETYSSYIYKVLKQVHPDTGISTRAMSILNSFVNDIFERVATEASKLAAYNKKSTISSREIQTSVRLILPGELAKHAVSEGTKAVTKYSSSAK.

The span at 1 to 10 (MPPKAAEKKP) shows a compositional bias: basic and acidic residues. The tract at residues 1-48 (MPPKAAEKKPSTGGKAPAGKAPAEKKEAGKKTAAAATGDKKKRGKTRK) is disordered. Residues Lys-8 and Lys-9 each carry the N6-acetyllysine; alternate modification. Residues Lys-8 and Lys-9 each participate in a glycyl lysine isopeptide (Lys-Gly) (interchain with G-Cter in SUMO); alternate cross-link. Low complexity predominate over residues 11–21 (STGGKAPAGKA). An N6-acetyllysine modification is found at Lys-15. Lys-25 carries the post-translational modification N6-acetyllysine; alternate. Lys-25 participates in a covalent cross-link: Glycyl lysine isopeptide (Lys-Gly) (interchain with G-Cter in SUMO); alternate. Lys-26 is covalently cross-linked (Glycyl lysine isopeptide (Lys-Gly) (interchain with G-Cter in SUMO)). Lys-134 is covalently cross-linked (Glycyl lysine isopeptide (Lys-Gly) (interchain with G-Cter in ubiquitin)).

Belongs to the histone H2B family. The nucleosome is a histone octamer containing two molecules each of H2A, H2B, H3 and H4 assembled in one H3-H4 heterotetramer and two H2A-H2B heterodimers. The octamer wraps approximately 147 bp of DNA. In terms of processing, monoubiquitinated by the ubc2-bre1 complex to form H2BK123ub1. H2BK123ub1 gives a specific tag for epigenetic transcriptional activation and is also prerequisite for H3K4me and H3K79me formation. H2BK123ub1 also modulates the formation of double-strand breaks during meiosis and is a prerequisite for DNA-damage checkpoint activation. Acetylated by gcn5 to form H2BK11ac and H2BK16ac. H2BK16ac can also be formed by esa1. Acetylation of N-terminal lysines and particularly formation of H2BK11acK16ac has a positive effect on transcription. Post-translationally, sumoylation to form H2BK6su or H2BK7su, and probably also H2BK16su or H2BK17su, occurs preferentially near the telomeres and represses gene transcription.

It is found in the nucleus. It localises to the chromosome. In terms of biological role, core component of nucleosome. Nucleosomes wrap and compact DNA into chromatin, limiting DNA accessibility to the cellular machineries which require DNA as a template. Histones thereby play a central role in transcription regulation, DNA repair, DNA replication and chromosomal stability. DNA accessibility is regulated via a complex set of post-translational modifications of histones, also called histone code, and nucleosome remodeling. This Neosartorya fischeri (strain ATCC 1020 / DSM 3700 / CBS 544.65 / FGSC A1164 / JCM 1740 / NRRL 181 / WB 181) (Aspergillus fischerianus) protein is Histone H2B (htb1).